The chain runs to 195 residues: Nicotinamide riboside kinase 1 (195 aa).

10 to 18 is a binding site for ATP; it reads GVTNGGKTT. Mg(2+) is bound by residues threonine 17 and aspartate 36. Aspartate 36 functions as the Proton acceptor in the catalytic mechanism. Substrate-binding positions include 36–39 and 55–56; these read DDFF and YD. Residue arginine 128 participates in ATP binding. Residues arginine 129 and 134-135 each bind substrate; that span reads YE. ATP-binding positions include 132–134 and 172–174; these read RVY and RSE.

The protein belongs to the uridine kinase family. NRK subfamily. As to quaternary structure, monomer.

The catalysed reaction is beta-nicotinamide D-riboside + ATP = beta-nicotinamide D-ribonucleotide + ADP + H(+). It carries out the reaction beta-D-ribosylnicotinate + ATP = nicotinate beta-D-ribonucleotide + ADP + H(+). Its pathway is cofactor biosynthesis; NAD(+) biosynthesis. Functionally, catalyzes the phosphorylation of nicotinamide riboside (NR) and nicotinic acid riboside (NaR) to form nicotinamide mononucleotide (NMN) and nicotinic acid mononucleotide (NaMN). The sequence is that of Nicotinamide riboside kinase 1 (Nmrk1) from Rattus norvegicus (Rat).